The following is a 516-amino-acid chain: Glycerol-3-phosphate dehydrogenase 1 (516 aa).

28–56 (DVIVIGGGITGVGIALDAATRGLTVALVE) contacts FAD.

It belongs to the FAD-dependent glycerol-3-phosphate dehydrogenase family. FAD serves as cofactor.

It localises to the cytoplasm. It carries out the reaction a quinone + sn-glycerol 3-phosphate = dihydroxyacetone phosphate + a quinol. The chain is Glycerol-3-phosphate dehydrogenase 1 (glpD1) from Mycobacterium bovis (strain ATCC BAA-935 / AF2122/97).